The primary structure comprises 108 residues: MMKGQLAGLMRQAQQMQENMKKAQDALAEIIVEGESGGGLVKVSMSCRHDVKRVAIDPSLLADDKDMLEDLVAAAFNDALRKVESTSQEKMASVTAGMPLPAGMKLPF.

It belongs to the YbaB/EbfC family. In terms of assembly, homodimer.

It is found in the cytoplasm. The protein resides in the nucleoid. Its function is as follows. Binds to DNA and alters its conformation. May be involved in regulation of gene expression, nucleoid organization and DNA protection. This chain is Nucleoid-associated protein Bpet3552, found in Bordetella petrii (strain ATCC BAA-461 / DSM 12804 / CCUG 43448).